A 60-amino-acid polypeptide reads, in one-letter code: Large ribosomal subunit protein uL30 (60 aa).

This sequence belongs to the universal ribosomal protein uL30 family. Part of the 50S ribosomal subunit.

This Polaromonas sp. (strain JS666 / ATCC BAA-500) protein is Large ribosomal subunit protein uL30.